Here is a 189-residue protein sequence, read N- to C-terminus: Ribosome maturation factor RimM (189 aa).

The PRC barrel domain occupies 113–189 (DGEYYWVDLL…TIVADWQPDY (77 aa)).

This sequence belongs to the RimM family. As to quaternary structure, binds ribosomal protein uS19.

It localises to the cytoplasm. Its function is as follows. An accessory protein needed during the final step in the assembly of 30S ribosomal subunit, possibly for assembly of the head region. Essential for efficient processing of 16S rRNA. May be needed both before and after RbfA during the maturation of 16S rRNA. It has affinity for free ribosomal 30S subunits but not for 70S ribosomes. The protein is Ribosome maturation factor RimM of Delftia acidovorans (strain DSM 14801 / SPH-1).